The following is an 806-amino-acid chain: Phenylalanine--tRNA ligase beta subunit (806 aa).

The 116-residue stretch at 40-155 (NKGVKGVVVG…SDAEVGADAL (116 aa)) folds into the tRNA-binding domain. The region spanning 409 to 484 (VQERTVSVTA…RLYGYDHIPV (76 aa)) is the B5 domain. Aspartate 462, aspartate 468, glutamate 471, and glutamate 472 together coordinate Mg(2+). The 94-residue stretch at 712-805 (PRFPSMTRDM…VEEKFGAELR (94 aa)) folds into the FDX-ACB domain.

The protein belongs to the phenylalanyl-tRNA synthetase beta subunit family. Type 1 subfamily. In terms of assembly, tetramer of two alpha and two beta subunits. Mg(2+) serves as cofactor.

The protein localises to the cytoplasm. The enzyme catalyses tRNA(Phe) + L-phenylalanine + ATP = L-phenylalanyl-tRNA(Phe) + AMP + diphosphate + H(+). This is Phenylalanine--tRNA ligase beta subunit from Bacillus cereus (strain ATCC 14579 / DSM 31 / CCUG 7414 / JCM 2152 / NBRC 15305 / NCIMB 9373 / NCTC 2599 / NRRL B-3711).